Here is a 90-residue protein sequence, read N- to C-terminus: Nodulation protein F (90 aa).

The Carrier domain maps to 4–89; that stretch reads QLESEIIGII…RHSGSHPRLA (86 aa). S46 carries the O-(pantetheine 4'-phosphoryl)serine modification. The segment at 65 to 90 is disordered; sequence RDEHGRGVVGSPERRRHSGSHPRLAH. A compositionally biased stretch (basic residues) spans 78-90; it reads RRRHSGSHPRLAH.

In terms of processing, 4'-phosphopantetheine is transferred from CoA to a specific serine of apo-NodF.

In terms of biological role, proposed to synthesize nod factor fatty acyl chain. Involved in trans-2,trans-4,trans-6,cis-11-octadecatetraenoic acid biosynthesis. The chain is Nodulation protein F (nodF) from Rhizobium meliloti (Ensifer meliloti).